The following is a 601-amino-acid chain: Deoxyhypusine synthase (601 aa).

NAD(+) contacts are provided by residues 109–113 (ANLMG) and 184–186 (SGG). 189–190 (EH) is a binding site for spermidine. Residues 210-242 (GHVSSTVSSEATAPPKGLQQRAEKPLGTRAAAG) form a disordered region. Residues 211–220 (HVSSTVSSEA) show a composition bias toward polar residues. D398 contacts NAD(+). The disordered stretch occupies residues 411–451 (PAARPAHRKGGPVADENAGNSKELKRSRKASSSSSTSATAV). Residues 440-451 (ASSSSSTSATAV) are compositionally biased toward low complexity. G489 contributes to the NAD(+) binding site. H494 lines the spermidine pocket. 514–515 (NG) is a binding site for NAD(+). Residues 520 to 522 (GSD) and 529 to 535 (EALSWGK) contribute to the spermidine site. Residue K535 is the Nucleophile of the active site. 548–549 (EV) contacts NAD(+). The segment at 568–601 (RRATDDAQPRRKRSSRGARPPQDVSGHSHLCRGE) is disordered.

Belongs to the deoxyhypusine synthase family. In terms of assembly, homodimer. The cofactor is NAD(+).

It carries out the reaction [eIF5A protein]-L-lysine + spermidine = [eIF5A protein]-deoxyhypusine + propane-1,3-diamine. Its pathway is protein modification; eIF5A hypusination. With respect to regulation, N1-guanyl-1,7-diaminoheptane has a small inhibitory effect on activity. In terms of biological role, catalyzes the NAD-dependent oxidative cleavage of spermidine and the subsequent transfer of the butylamine moiety of spermidine to the epsilon-amino group of a specific lysine residue of the eIF-5A precursor protein to form the intermediate deoxyhypusine residue. The chain is Deoxyhypusine synthase from Leishmania donovani.